The following is a 191-amino-acid chain: Cell division protein SepF (191 aa).

Residues 151 to 165 (SSSPEEASPSSVPTE) are compositionally biased toward low complexity. Residues 151–191 (SSSPEEASPSSVPTENTPQYSLGKNTTPEPAWGNSKLSAYS) form a disordered region. The segment covering 166–178 (NTPQYSLGKNTTP) has biased composition (polar residues).

It belongs to the SepF family. In terms of assembly, homodimer. Interacts with FtsZ.

Its subcellular location is the cytoplasm. In terms of biological role, cell division protein that is part of the divisome complex and is recruited early to the Z-ring. Probably stimulates Z-ring formation, perhaps through the cross-linking of FtsZ protofilaments. Its function overlaps with FtsA. The polypeptide is Cell division protein SepF (Prochlorococcus marinus (strain MIT 9215)).